The sequence spans 207 residues: Fibroblast growth factor 18 (207 aa).

Positions M1 to A27 are cleaved as a signal peptide. N39 carries an N-linked (GlcNAc...) asparagine glycan. An intrachain disulfide couples C109 to C127. N-linked (GlcNAc...) asparagine glycosylation occurs at N137.

It belongs to the heparin-binding growth factors family. Interacts with FGFR3 and FGFR4.

It is found in the secreted. In terms of biological role, plays an important role in the regulation of cell proliferation, cell differentiation and cell migration. Required for normal ossification and bone development. Stimulates hepatic and intestinal proliferation. In Mus musculus (Mouse), this protein is Fibroblast growth factor 18 (Fgf18).